A 395-amino-acid chain; its full sequence is Na(+)/H(+) antiporter NhaA (395 aa).

11 helical membrane passes run 15-35 (FLGSPSGGACVLLLASLAGFV), 66-86 (IDAWVSDGFMTLFFLVVILEI), 101-121 (VALPLIGALGGMIVPALTYLL), 132-152 (GWAIPVATDAAFTLPIILALG), 161-181 (AWLMALAIFDDVLGIVVIAVF), 184-204 (NALYWPALAAAVVVTAALIGA), 219-239 (CILLWIALLGSGLHPTLAGVI), 265-285 (ALTPVVTWVILPLFGFMNVGV), 301-321 (LGIMSGLLIGKPVGVFSATLL), 339-359 (VFGLSLLCGIGFTISLFIANL), and 366-386 (LVIPAKMGIFAGSVLSALAGW).

It belongs to the NhaA Na(+)/H(+) (TC 2.A.33) antiporter family.

Its subcellular location is the cell inner membrane. It carries out the reaction Na(+)(in) + 2 H(+)(out) = Na(+)(out) + 2 H(+)(in). Na(+)/H(+) antiporter that extrudes sodium in exchange for external protons. The protein is Na(+)/H(+) antiporter NhaA of Gluconacetobacter diazotrophicus (strain ATCC 49037 / DSM 5601 / CCUG 37298 / CIP 103539 / LMG 7603 / PAl5).